The chain runs to 189 residues: uncharacterized protein (189 aa).

An HTH tetR-type domain is found at 9 to 69 (ADTGGRILRA…SMLTSHIAAV (61 aa)). Residues 32–51 (TLAEIARRAGVSRPTVYRRW) constitute a DNA-binding region (H-T-H motif).

This is an uncharacterized protein from Mycobacterium bovis (strain ATCC BAA-935 / AF2122/97).